The following is a 408-amino-acid chain: RUN domain-containing protein 3B (408 aa).

Residues 1–25 (MASRSLGGLSGSRGGGGGGGGKKSL) are disordered. The span at 8–22 (GLSGSRGGGGGGGGK) shows a compositional bias: gly residues. Arg13 bears the Omega-N-methylarginine mark. An RUN domain is found at 58 to 190 (DDSSPEFNNF…IDFSFCLKGE (133 aa)). Residues 213 to 238 (DSISSDEEELRTFGSSDSESSTPENV) are disordered. Ser216 and Ser217 each carry phosphoserine. Polar residues predominate over residues 225-236 (FGSSDSESSTPE). Positions 301–326 (AHKLEKEQLEYIIVELQDQLKSYQSL) form a coiled coil. Residues 337 to 359 (QASLDPSHSQEGDGKQDSLNFIG) are disordered.

Belongs to the RUNDC3 family. As to quaternary structure, interacts with RAP2A.

The sequence is that of RUN domain-containing protein 3B (Rundc3b) from Mus musculus (Mouse).